The following is a 950-amino-acid chain: Protocadherin alpha-9 (950 aa).

An N-terminal signal peptide occupies residues 1–29 (MLYSSRGDPEGQPLLLSLLILAMWVVGSG). Cadherin domains follow at residues 30-133 (QLHY…PPVF), 134-242 (PATQ…APVF), 243-350 (DRTL…APQL), 351-455 (TIKT…APAF), 456-565 (AQPE…APAL), and 588-678 (GVVV…APKS). Residues 30-697 (QLHYSVPEEA…GPEVTLVDVN (668 aa)) lie on the Extracellular side of the membrane. Asparagine 254 and asparagine 265 each carry an N-linked (GlcNAc...) asparagine glycan. A glycan (N-linked (GlcNAc...) asparagine) is linked at asparagine 548. Residues 698-718 (VYLIIAICAVSSLLVLTLLLY) form a helical membrane-spanning segment. The Cytoplasmic segment spans residues 719 to 950 (TVLRCSAMPT…GNSTTDNSDQ (232 aa)). The PXXP 1 repeat unit spans residues 734-737 (PGKP). Residues 734 to 894 (PGKPTLVCSS…PDKFIIPGSP (161 aa)) form a 5 X 4 AA repeats of P-X-X-P region. Disordered regions lie at residues 759–808 (CSGE…DWRY) and 827–950 (ILRA…NSDQ). The segment covering 789–798 (PSASSDSSGK) has biased composition (polar residues). PXXP repeat units lie at residues 799 to 802 (PRQP), 832 to 835 (PGGP), 873 to 876 (PGNP), and 891 to 894 (PGSP). Residues 909–923 (DKSDFITFGKKEETK) show a composition bias toward basic and acidic residues.

Its subcellular location is the cell membrane. In terms of biological role, potential calcium-dependent cell-adhesion protein. May be involved in the establishment and maintenance of specific neuronal connections in the brain. This is Protocadherin alpha-9 (PCDHA9) from Pan troglodytes (Chimpanzee).